The primary structure comprises 256 residues: MTDPRKGDHAEPTTHFGYQDVPESQKAKKVAEVFHSVAAKYDLMNDVLSGGMHRLWKRFTIELSGVRSGNRVLDIAGGTGDLAAKFSRLVGPTGQVVLADINESMLKVGRDRLLDRGVAGNIEFVQADAEKLPFPDNHFDCVTIAFGLRNVTHKDEAIRSMLRVLKPGGRLLVLEFSKPTNKLMSKAYDAYSFAFMPLAGKLITNDSESYRYLAESIRMHPDQETLKAMMVEAGFDRVTYHNMTSGIVAVHRGIKP.

Residues Met-1 to Pro-12 are compositionally biased toward basic and acidic residues. A disordered region spans residues Met-1–Val-21. S-adenosyl-L-methionine-binding positions include Thr-79, Asp-100, and Asp-128 to Ala-129.

This sequence belongs to the class I-like SAM-binding methyltransferase superfamily. MenG/UbiE family.

It carries out the reaction a 2-demethylmenaquinol + S-adenosyl-L-methionine = a menaquinol + S-adenosyl-L-homocysteine + H(+). The enzyme catalyses a 2-methoxy-6-(all-trans-polyprenyl)benzene-1,4-diol + S-adenosyl-L-methionine = a 5-methoxy-2-methyl-3-(all-trans-polyprenyl)benzene-1,4-diol + S-adenosyl-L-homocysteine + H(+). The protein operates within quinol/quinone metabolism; menaquinone biosynthesis; menaquinol from 1,4-dihydroxy-2-naphthoate: step 2/2. It participates in cofactor biosynthesis; ubiquinone biosynthesis. In terms of biological role, methyltransferase required for the conversion of demethylmenaquinol (DMKH2) to menaquinol (MKH2) and the conversion of 2-polyprenyl-6-methoxy-1,4-benzoquinol (DDMQH2) to 2-polyprenyl-3-methyl-6-methoxy-1,4-benzoquinol (DMQH2). The protein is Ubiquinone/menaquinone biosynthesis C-methyltransferase UbiE of Pseudomonas entomophila (strain L48).